A 270-amino-acid polypeptide reads, in one-letter code: Interleukin-1 alpha (270 aa).

Residues 1–112 (MAKVPDLFED…DTEEEIIKPR (112 aa)) constitute a propeptide that is removed on maturation. Residue lysine 82 is modified to N6-acetyllysine. A nuclear localization signal (NLS) region spans residues 82–86 (KKRRL). Serine 87 is subject to Phosphoserine. Asparagine 102 and asparagine 141 each carry an N-linked (GlcNAc...) asparagine glycan.

This sequence belongs to the IL-1 family. In terms of assembly, monomer. Interacts with TMED10; the interaction mediates the translocation from the cytoplasm into the ERGIC (endoplasmic reticulum-Golgi intermediate compartment) and thereby secretion. Interacts with IL1R1. Interacts with S100A13; this interaction is the first step in the export of IL1A, followed by direct translocation of this complex across the plasma membrane. In terms of processing, acetylated within its nuclear localization sequence, which impacts subcellular localization. Post-translationally, proteolytic processed by CAPN1 in a calcium-dependent manner. Cleavage from 31 kDa precursor to 18 kDa biologically active molecules. Phosphorylated. Phosphorylation greatly enhances susceptibility to digestion and promotes the conversion of pre-IL1A alpha to the biologically active IL1A.

It is found in the nucleus. Its subcellular location is the cytoplasm. It localises to the secreted. Its function is as follows. Cytokine constitutively present intracellularly in nearly all resting non-hematopoietic cells that plays an important role in inflammation and bridges the innate and adaptive immune systems. After binding to its receptor IL1R1 together with its accessory protein IL1RAP, forms the high affinity interleukin-1 receptor complex. Signaling involves the recruitment of adapter molecules such as MYD88, IRAK1 or IRAK4. In turn, mediates the activation of NF-kappa-B and the three MAPK pathways p38, p42/p44 and JNK pathways. Within the cell, acts as an alarmin and cell death results in its liberation in the extracellular space after disruption of the cell membrane to induce inflammation and alert the host to injury or damage. In addition to its role as a danger signal, which occurs when the cytokine is passively released by cell necrosis, directly senses DNA damage and acts as signal for genotoxic stress without loss of cell integrity. In Sus scrofa (Pig), this protein is Interleukin-1 alpha (IL1A).